A 204-amino-acid polypeptide reads, in one-letter code: bMERB domain-containing protein 1 (204 aa).

Residues 3–150 form the bMERB domain; it reads LKQSLSTHLE…EQEEDKEMAD (148 aa). Positions 162 to 187 are disordered; that stretch reads VTKSPASSRAEKKAEPPPSKPTVAKT.

The protein is bMERB domain-containing protein 1 of Homo sapiens (Human).